Consider the following 406-residue polypeptide: 4-hydroxy-3-methylbut-2-en-1-yl diphosphate synthase (ferredoxin) (406 aa).

Cys315, Cys318, Cys349, and Glu356 together coordinate [4Fe-4S] cluster.

The protein belongs to the IspG family. Requires [4Fe-4S] cluster as cofactor.

The catalysed reaction is (2E)-4-hydroxy-3-methylbut-2-enyl diphosphate + 2 oxidized [2Fe-2S]-[ferredoxin] + H2O = 2-C-methyl-D-erythritol 2,4-cyclic diphosphate + 2 reduced [2Fe-2S]-[ferredoxin] + H(+). Its pathway is isoprenoid biosynthesis; isopentenyl diphosphate biosynthesis via DXP pathway; isopentenyl diphosphate from 1-deoxy-D-xylulose 5-phosphate: step 5/6. Converts 2C-methyl-D-erythritol 2,4-cyclodiphosphate (ME-2,4cPP) into 1-hydroxy-2-methyl-2-(E)-butenyl 4-diphosphate. The polypeptide is 4-hydroxy-3-methylbut-2-en-1-yl diphosphate synthase (ferredoxin) (Rippkaea orientalis (strain PCC 8801 / RF-1) (Cyanothece sp. (strain PCC 8801))).